The sequence spans 296 residues: Glycine--tRNA ligase alpha subunit (296 aa).

The protein belongs to the class-II aminoacyl-tRNA synthetase family. As to quaternary structure, tetramer of two alpha and two beta subunits.

Its subcellular location is the cytoplasm. It catalyses the reaction tRNA(Gly) + glycine + ATP = glycyl-tRNA(Gly) + AMP + diphosphate. In Listeria welshimeri serovar 6b (strain ATCC 35897 / DSM 20650 / CCUG 15529 / CIP 8149 / NCTC 11857 / SLCC 5334 / V8), this protein is Glycine--tRNA ligase alpha subunit.